The following is a 663-amino-acid chain: Transketolase 2 (663 aa).

His25 is a substrate binding site. Thiamine diphosphate is bound by residues His65 and 113–115 (GPL). Asp154 is a Mg(2+) binding site. Thiamine diphosphate-binding residues include Gly155 and Asn184. Mg(2+) contacts are provided by Asn184 and Ile186. Substrate contacts are provided by His259, Arg356, and Ser383. His259 is a binding site for thiamine diphosphate. Glu410 acts as the Proton donor in catalysis. Residue Phe436 participates in thiamine diphosphate binding. Positions 460, 468, and 519 each coordinate substrate.

The protein belongs to the transketolase family. Homodimer. Requires Mg(2+) as cofactor. Ca(2+) is required as a cofactor. It depends on Mn(2+) as a cofactor. The cofactor is Co(2+). Thiamine diphosphate serves as cofactor.

The catalysed reaction is D-sedoheptulose 7-phosphate + D-glyceraldehyde 3-phosphate = aldehydo-D-ribose 5-phosphate + D-xylulose 5-phosphate. Functionally, catalyzes the transfer of a two-carbon ketol group from a ketose donor to an aldose acceptor, via a covalent intermediate with the cofactor thiamine pyrophosphate. This Aliivibrio fischeri (strain ATCC 700601 / ES114) (Vibrio fischeri) protein is Transketolase 2 (tkt2).